We begin with the raw amino-acid sequence, 1073 residues long: Probable lipase MIL1 (1073 aa).

Disordered stretches follow at residues 1–151 and 163–190; these read MSDS…AVSS and LTSK…KSVN. 2 stretches are compositionally biased toward basic and acidic residues: residues 54 to 81 and 101 to 121; these read QAKE…EAGK and GIDR…HDTD. An APM2-interacting WQEMP motif motif is present at residues 143–147; sequence WQEMP. N190, N229, and N236 each carry an N-linked (GlcNAc...) asparagine glycan. The tract at residues 230–267 is disordered; that stretch reads SSQTSVNLTSSPSTTSLNNEKNNDDDDDDSYDEYEDDV. Positions 233 to 249 are enriched in low complexity; that stretch reads TSVNLTSSPSTTSLNNE. Residues 252–267 are compositionally biased toward acidic residues; the sequence is NDDDDDDSYDEYEDDV. N-linked (GlcNAc...) asparagine glycosylation occurs at N280. Residues 292–312 traverse the membrane as a helical segment; it reads FAYVGAINILANQMCTNLATL. The tract at residues 385–448 is disordered; sequence NPWENDRDHE…SDVPGKVLDP (64 aa). Residues 404–427 show a composition bias toward polar residues; that stretch reads RMSPNEQNGSVQASTPDPEQSATP. N411 is a glycosylation site (N-linked (GlcNAc...) asparagine). Position 435 is a phosphoserine (S435). The chain crosses the membrane as a helical span at residues 457-477; that stretch reads LNIDVAWTIICDLFLICLQSS. N-linked (GlcNAc...) asparagine glycosylation occurs at N495. 2 helical membrane passes run 553–573 and 577–597; these read LVLG…IAAG and IGIT…VVAV. A glycan (N-linked (GlcNAc...) asparagine) is linked at N726. Residues 818 to 838 traverse the membrane as a helical segment; that stretch reads WFLAYLFRAAAGGFSAVMGIS. N850 carries an N-linked (GlcNAc...) asparagine glycan. 2 disordered regions span residues 942-968 and 1010-1073; these read GRDM…EGIA and KEVE…PDDI. Pro residues predominate over residues 1027–1037; it reads PSTPKINPPQS. S1037 carries the post-translational modification Phosphoserine.

Belongs to the TMCO4 family. In terms of assembly, interacts with RPP0. Interacts with APM2.

It is found in the golgi apparatus membrane. The protein localises to the early endosome membrane. It localises to the cytoplasmic vesicle. Its subcellular location is the clathrin-coated vesicle membrane. Functionally, probable lipase that recruits the AP-1-related (AP-1R) complex to membranes via interaction with APM2. The AP-1R complex is an adapter protein complex that mediates of cargo protein SNC1 sorting in clathrin-coated vesicles. The sequence is that of Probable lipase MIL1 from Saccharomyces cerevisiae (strain ATCC 204508 / S288c) (Baker's yeast).